The sequence spans 260 residues: Thiazole synthase (260 aa).

K102 (schiff-base intermediate with DXP) is an active-site residue. 1-deoxy-D-xylulose 5-phosphate is bound by residues G163, 189 to 190 (AG), and 211 to 212 (NT).

The protein belongs to the ThiG family. Homotetramer. Forms heterodimers with either ThiH or ThiS.

The protein localises to the cytoplasm. It catalyses the reaction [ThiS sulfur-carrier protein]-C-terminal-Gly-aminoethanethioate + 2-iminoacetate + 1-deoxy-D-xylulose 5-phosphate = [ThiS sulfur-carrier protein]-C-terminal Gly-Gly + 2-[(2R,5Z)-2-carboxy-4-methylthiazol-5(2H)-ylidene]ethyl phosphate + 2 H2O + H(+). Its pathway is cofactor biosynthesis; thiamine diphosphate biosynthesis. Its function is as follows. Catalyzes the rearrangement of 1-deoxy-D-xylulose 5-phosphate (DXP) to produce the thiazole phosphate moiety of thiamine. Sulfur is provided by the thiocarboxylate moiety of the carrier protein ThiS. In vitro, sulfur can be provided by H(2)S. The chain is Thiazole synthase from Geobacter sp. (strain M21).